Consider the following 183-residue polypeptide: uncharacterized protein (183 aa).

This is an uncharacterized protein from Saccharomyces cerevisiae (strain ATCC 204508 / S288c) (Baker's yeast).